The following is a 224-amino-acid chain: Phosphoribosylformylglycinamidine synthase subunit PurQ (224 aa).

Positions 2–224 (KFAVIQFPGS…SILNHAEVKA (223 aa)) constitute a Glutamine amidotransferase type-1 domain. Cys-86 serves as the catalytic Nucleophile. Residues His-195 and Glu-197 contribute to the active site.

In terms of assembly, part of the FGAM synthase complex composed of 1 PurL, 1 PurQ and 2 PurS subunits.

Its subcellular location is the cytoplasm. The enzyme catalyses N(2)-formyl-N(1)-(5-phospho-beta-D-ribosyl)glycinamide + L-glutamine + ATP + H2O = 2-formamido-N(1)-(5-O-phospho-beta-D-ribosyl)acetamidine + L-glutamate + ADP + phosphate + H(+). The catalysed reaction is L-glutamine + H2O = L-glutamate + NH4(+). The protein operates within purine metabolism; IMP biosynthesis via de novo pathway; 5-amino-1-(5-phospho-D-ribosyl)imidazole from N(2)-formyl-N(1)-(5-phospho-D-ribosyl)glycinamide: step 1/2. Its function is as follows. Part of the phosphoribosylformylglycinamidine synthase complex involved in the purines biosynthetic pathway. Catalyzes the ATP-dependent conversion of formylglycinamide ribonucleotide (FGAR) and glutamine to yield formylglycinamidine ribonucleotide (FGAM) and glutamate. The FGAM synthase complex is composed of three subunits. PurQ produces an ammonia molecule by converting glutamine to glutamate. PurL transfers the ammonia molecule to FGAR to form FGAM in an ATP-dependent manner. PurS interacts with PurQ and PurL and is thought to assist in the transfer of the ammonia molecule from PurQ to PurL. The chain is Phosphoribosylformylglycinamidine synthase subunit PurQ from Lactobacillus delbrueckii subsp. bulgaricus (strain ATCC 11842 / DSM 20081 / BCRC 10696 / JCM 1002 / NBRC 13953 / NCIMB 11778 / NCTC 12712 / WDCM 00102 / Lb 14).